Here is a 308-residue protein sequence, read N- to C-terminus: Pantoate--beta-alanine ligase (308 aa).

Ala-2 is a propeptide (removed; partial).

The protein belongs to the pantothenate synthetase family. In terms of assembly, homodimer. Expressed at low levels in leaf and root.

The protein resides in the cytoplasm. The catalysed reaction is (R)-pantoate + beta-alanine + ATP = (R)-pantothenate + AMP + diphosphate + H(+). Its pathway is cofactor biosynthesis; (R)-pantothenate biosynthesis; (R)-pantothenate from (R)-pantoate and beta-alanine: step 1/1. This chain is Pantoate--beta-alanine ligase (PANC), found in Lotus japonicus (Lotus corniculatus var. japonicus).